Reading from the N-terminus, the 492-residue chain is Probable malate:quinone oxidoreductase 1 (492 aa).

The protein belongs to the MQO family. FAD is required as a cofactor.

It catalyses the reaction (S)-malate + a quinone = a quinol + oxaloacetate. It participates in carbohydrate metabolism; tricarboxylic acid cycle; oxaloacetate from (S)-malate (quinone route): step 1/1. The sequence is that of Probable malate:quinone oxidoreductase 1 from Staphylococcus aureus (strain MW2).